The primary structure comprises 511 residues: Peptide transporter YePEPT (511 aa).

Residues 1-19 (MQTSTNTPGGRTFFGHPYP) are Cytoplasmic-facing. The chain crosses the membrane as a helical span at residues 20-45 (LSGLFLSEMWERFSFYGIRPLLILFM). Over 46 to 59 (AATVFDGGMGLPRE) the chain is Periplasmic. A helical membrane pass occupies residues 60-84 (QASAIVGIFAGSMYLAALPGGLLAD). Residues 85–88 (NWLG) lie on the Cytoplasmic side of the membrane. A helical membrane pass occupies residues 89 to 109 (QQRAVWYGSILIALGHLSIAL). Residues 110–115 (SAFFGN) lie on the Periplasmic side of the membrane. A helical membrane pass occupies residues 116 to 138 (DLFFIGLVFIVLGTGLFKTCISV). The Cytoplasmic segment spans residues 139–149 (MVGTLYKPGDA). A helical transmembrane segment spans residues 150–175 (RRDGGFSLFYMGINMGSFIAPLLSGW). Residues 176–181 (LLRTHG) are Periplasmic-facing. Residues 182–208 (WHWGFGIGGIGMLVALLIFRGFAIPAM) form a helical membrane-spanning segment. At 209 to 232 (KRYDAEVGLDSSWNKPTNQRQGVG) the chain is on the cytoplasmic side. Residues 233 to 253 (RWVTAIMAVVVVIIALISQGV) traverse the membrane as a helical segment. At 254–256 (IPI) the chain is on the periplasmic side. The chain crosses the membrane as a helical span at residues 257 to 279 (NPVMIASLLVYVIAASVTLYFIY). Topologically, residues 280–294 (LFAFAKMSRKDRARL) are cytoplasmic. The helical transmembrane segment at 295-321 (LVCFILLVSAAFFWSAFEQKPTSFNLF) threads the bilayer. Over 322–335 (ANDYTDRMVMGFEI) the chain is Periplasmic. The helical transmembrane segment at 336–357 (PTVWFQSINALFIILLAPVFSW) threads the bilayer. The Cytoplasmic segment spans residues 358–369 (AWPALAKKKIQP). A helical membrane pass occupies residues 370–396 (SSITKFVIGILCAAAGFAVMMYAAQHV). The Periplasmic segment spans residues 397 to 405 (LSSGGAGVS). The helical transmembrane segment at 406-426 (PLWLVMSILLLTLGELCLSPI) threads the bilayer. Residues 427–441 (GLATMTLLAPDRMRG) are Cytoplasmic-facing. Residues 442 to 462 (QVMGLWFCASSLGNLAAGLIG) traverse the membrane as a helical segment. Residues 463–471 (GHVKADQLD) are Periplasmic-facing. The chain crosses the membrane as a helical span at residues 472–496 (MLPTLFARCSIALVICAAVLILLIV). The Cytoplasmic portion of the chain corresponds to 497-511 (PIRRLMNNTQGQQTA).

This sequence belongs to the major facilitator superfamily. Proton-dependent oligopeptide transporter (POT/PTR) (TC 2.A.17) family.

It is found in the cell inner membrane. Transport is inhibited by the proton ionophore carbonyl cyanide m-chlorophenylhydrazone (CCCP). In terms of biological role, mediates the proton-dependent uptake of dipeptides. Shows higher affinity for dipeptides with a negatively charged amino acid residue at the N-terminal position, such as Asp-Ala and Glu-Ala. Also displays specificity for Ala-Ala, Ala-Tyr and Tyr-Ala. In Yersinia enterocolitica subsp. palearctica serotype O:3 (strain YE-P4), this protein is Peptide transporter YePEPT.